The following is an 887-amino-acid chain: Bifunctional uridylyltransferase/uridylyl-removing enzyme (887 aa).

The segment at methionine 1–glutamate 337 is uridylyltransferase. The uridylyl-removing stretch occupies residues valine 339–valine 699. In terms of domain architecture, HD spans valine 457–leucine 579. ACT domains are found at residues glutamine 700–arginine 782 and methionine 809–histidine 887.

The protein belongs to the GlnD family. Requires Mg(2+) as cofactor.

It carries out the reaction [protein-PII]-L-tyrosine + UTP = [protein-PII]-uridylyl-L-tyrosine + diphosphate. The enzyme catalyses [protein-PII]-uridylyl-L-tyrosine + H2O = [protein-PII]-L-tyrosine + UMP + H(+). Uridylyltransferase (UTase) activity is inhibited by glutamine, while glutamine activates uridylyl-removing (UR) activity. Its function is as follows. Modifies, by uridylylation and deuridylylation, the PII regulatory proteins (GlnB and homologs), in response to the nitrogen status of the cell that GlnD senses through the glutamine level. Under low glutamine levels, catalyzes the conversion of the PII proteins and UTP to PII-UMP and PPi, while under higher glutamine levels, GlnD hydrolyzes PII-UMP to PII and UMP (deuridylylation). Thus, controls uridylylation state and activity of the PII proteins, and plays an important role in the regulation of nitrogen assimilation and metabolism. In Acinetobacter baumannii (strain ATCC 17978 / DSM 105126 / CIP 53.77 / LMG 1025 / NCDC KC755 / 5377), this protein is Bifunctional uridylyltransferase/uridylyl-removing enzyme.